Consider the following 287-residue polypeptide: ATP synthase gamma chain (287 aa).

The protein belongs to the ATPase gamma chain family. In terms of assembly, F-type ATPases have 2 components, CF(1) - the catalytic core - and CF(0) - the membrane proton channel. CF(1) has five subunits: alpha(3), beta(3), gamma(1), delta(1), epsilon(1). CF(0) has three main subunits: a, b and c.

The protein localises to the cell inner membrane. In terms of biological role, produces ATP from ADP in the presence of a proton gradient across the membrane. The gamma chain is believed to be important in regulating ATPase activity and the flow of protons through the CF(0) complex. This chain is ATP synthase gamma chain, found in Serratia proteamaculans (strain 568).